A 469-amino-acid chain; its full sequence is MAQTLYDKLWNTHVVHTEEDGTTLLYIDRQLLHEVTSPQAFEGLKIAQRPVWRISANLAVSDHNVPTTDRSHGIADPVSKLQVDTLDANCDAFGITQFKMNDVRQGIVHIIGPEQGATLPGMTIVCGDSHTSTHGAFGALAHGIGTSEVEHVLATQTLLQKKSKNMLVKVEGTLPRGCTAKDIVLAIIGKIGTAGGTGYAIEFGGSTIRALTMEGRMTVCNMAIEAGARAGMVAVDDTTIDYLKGRPFVPTGAEWNQAVEYWRQFKSDDGAQFDRVVELNAAEIVPQVTWGTSPEMVTSIDGRVPDPEREKDPVKRDAMERALAYMALEPNTPIESIKVDKIFIGSCTNARIEDIRAAAYVVKKLNRRVASNVRLAMVVPGSGLVKAQAEREGLDKVFTDAGFEWREPGCSMCLAMNADRLDPGERCASTSNRNFEGRQGAGGRTHLVSPAMAAAAAIEGHFVDIRQLG.

[4Fe-4S] cluster contacts are provided by C347, C410, and C413.

This sequence belongs to the aconitase/IPM isomerase family. LeuC type 1 subfamily. Heterodimer of LeuC and LeuD. It depends on [4Fe-4S] cluster as a cofactor.

It carries out the reaction (2R,3S)-3-isopropylmalate = (2S)-2-isopropylmalate. It functions in the pathway amino-acid biosynthesis; L-leucine biosynthesis; L-leucine from 3-methyl-2-oxobutanoate: step 2/4. Its function is as follows. Catalyzes the isomerization between 2-isopropylmalate and 3-isopropylmalate, via the formation of 2-isopropylmaleate. This is 3-isopropylmalate dehydratase large subunit from Burkholderia lata (strain ATCC 17760 / DSM 23089 / LMG 22485 / NCIMB 9086 / R18194 / 383).